The following is a 546-amino-acid chain: Cytochrome P450 monooxygenase gloP (546 aa).

The helical transmembrane segment at 17 to 37 threads the bilayer; sequence TLSGGILTFLFIVVIAHFVLT. Residues Asn-189, Asn-413, and Asn-416 are each glycosylated (N-linked (GlcNAc...) asparagine). A heme-binding site is contributed by Cys-492.

The protein belongs to the cytochrome P450 family. The cofactor is heme.

The protein resides in the membrane. The protein operates within mycotoxin biosynthesis. Its function is as follows. Cytochrome P450 monooxygenase; part of the gene cluster that mediates the biosynthesis of pneumocandins, lipohexapeptides of the echinocandin family that prevent fungal cell wall formation by non-competitive inhibition of beta-1,3-glucan synthase. The 10,12-dimethylmyristoyl side chain is synthesized by the reducing polyketide synthase gloL/GLPKS4. The thioesterase gloN/GLHYD exclusively interacts with gloL/GLPKS4 to maintain turnover of the polyketide side chain. The 10R,12S-dimethylmyristic acid is then transferred to the first thiolation domain of the nonribosomal peptide synthetase gloA/GLNRPS4 by the acyl-AMP ligase gloD/GLligase, followed by its acylation to L-ornithine to trigger elongation of the cyclic hexapeptide. L-ornithine, 4R-hydroxyl-L-proline (generated from L-proline by the dioxygenase gloF/GLOXY2), 3S-hydroxyl-L-homotyrosine (generated by gloG/GLHtyB, gloH/GLHtyA, gloI/GLHtyC, gloJ/GLHtyD and hydroxylated at C-3 by the dioxygenase gloM/GLOXY1), 3R-hydroxyl-L-glutamine (generated from L-glutamine probably by the dioxygenase gloE/GLOXY3) and 3S-hydroxyl-L-proline (generated from L-proline by the dioxygenase gloF/GLOXY2 to yield pneumocandin B0), or 3S-hydroxyl-4S-methyl-L-proline (generated from L-leucine by the dioxygenase gloC/GLOXY4 to yield pneumocandin A0) are sequentially added to the growing chain. The last C domain of gloA/GLNRPS4 is proposed to be responsible for cyclization by condensation to form the peptide bond between L-ornithine and 3S-hydroxyl-4S-methyl-L-proline (for pneumocandin A0) or 3S-hydroxyl-L-proline (for pneumocandin B0). Finally, the subsequent C-4 hydroxylation of 3S-hydroxyl-L-homotyrosine and L-ornithine dihydroxylation at C-4 and C-5 are performed by the cytochrome P450 monooxygenases gloP/GLP450-1 and gloO/GLP450-2, respectively. The protein is Cytochrome P450 monooxygenase gloP of Glarea lozoyensis (strain ATCC 20868 / MF5171).